A 441-amino-acid polypeptide reads, in one-letter code: Amino-acid acetyltransferase (441 aa).

The N-acetyltransferase domain maps to 295 to 434 (EKVRGAGIDD…KALYNFQRRS (140 aa)).

This sequence belongs to the acetyltransferase family. ArgA subfamily.

Its subcellular location is the cytoplasm. It catalyses the reaction L-glutamate + acetyl-CoA = N-acetyl-L-glutamate + CoA + H(+). The protein operates within amino-acid biosynthesis; L-arginine biosynthesis; N(2)-acetyl-L-ornithine from L-glutamate: step 1/4. The chain is Amino-acid acetyltransferase from Photobacterium profundum (strain SS9).